Consider the following 101-residue polypeptide: Ubiquitin-like protein SMT3 (101 aa).

Residue serine 2 is modified to N-acetylserine. Phosphoserine is present on residues serine 2 and serine 4. In terms of domain architecture, Ubiquitin-like spans 22-98; sequence THINLKVSDG…IEAHREQIGG (77 aa). Residue glycine 98 forms a Glycyl lysine isopeptide (Gly-Lys) (interchain with K-? in acceptor proteins) linkage. A propeptide spanning residues 99-101 is cleaved from the precursor; sequence ATY.

The protein belongs to the ubiquitin family. SUMO subfamily. Activated by a E1 ligase composed of AOS1 and UBA2.

Not known; suppressor of MIF2 mutations. The sequence is that of Ubiquitin-like protein SMT3 (SMT3) from Saccharomyces cerevisiae (strain ATCC 204508 / S288c) (Baker's yeast).